The following is a 603-amino-acid chain: Protein regulator of cytokinesis 1 (603 aa).

The tract at residues 1-341 (MRRSEVLADE…HLHDAEIVRL (341 aa)) is dimerization. Coiled coils occupy residues 34-65 (EQRL…RERL), 96-136 (ILQL…DILC), 211-246 (SLEN…IREL), 272-304 (RNAL…LAQF), and 383-463 (GNLL…AEML). The segment at 342 to 466 (RNYYDVHKEL…QTEAEMLYGS (125 aa)) is spectrin-fold. Over residues 447 to 459 (KQERQLKNKKQTE) the composition is skewed to basic and acidic residues. Residues 447–502 (KQERQLKNKKQTEAEMLYGSTPRTPSKRPGQTPKKSGKMNTTTMSSATPNSSIRPV) are disordered. The interval 467-603 (TPRTPSKRPG…RILNSTNIQS (137 aa)) is unstructured, Arg/Lys rich. The residue at position 470 (T470) is a Phosphothreonine; by CDK1. Positions 484 to 499 (KMNTTTMSSATPNSSI) are enriched in polar residues. Phosphoserine is present on residues S510 and S568. T575 is subject to Phosphothreonine. Residues 583–603 (LSKASRSDATSRILNSTNIQS) form a disordered region. The segment covering 589 to 603 (SDATSRILNSTNIQS) has biased composition (polar residues). Residue T599 is modified to Phosphothreonine; by PLK1.

The protein belongs to the MAP65/ASE1 family. As to quaternary structure, homodimer. Interacts with the C-terminal Rho-GAP domain and the basic region of RACGAP1. The interaction with RACGAP1 inhibits its GAP activity towards CDC42 in vitro, which may be required for maintaining normal spindle morphology. Interacts (via N-terminus) with the C-terminus of CENPE (via C-terminus); the interaction occurs during late mitosis. Interacts (via N-terminus) with KIF4A (via C-terminus); the interaction is required for the progression of mitosis. Interacts (via N-terminus) with KIF23 (via C-terminus); the interaction occurs during late mitosis. Interacts with KIF14 and KIF20A. Interacts with PLK1. Interacts with KIF20B. Interacts with CCDC66. Phosphorylation by CDK1 in early mitosis holds PRC1 in an inactive monomeric state, during the metaphase to anaphase transition, PRC1 is dephosphorylated, promoting interaction with KIF4A, which then translocates PRC1 along mitotic spindles to the plus ends of antiparallel interdigitating microtubules. Dephosphorylation also promotes MT-bundling activity by allowing dimerization. Phosphorylation by CDK1 prevents PLK1-binding: upon degradation of CDK1 at anaphase and dephosphorylation, it is then phosphorylated by PLK1, leading to cytokinesis.

Its subcellular location is the nucleus. The protein localises to the cytoplasm. It is found in the cytoskeleton. It localises to the spindle pole. The protein resides in the midbody. Its function is as follows. Key regulator of cytokinesis that cross-links antiparrallel microtubules at an average distance of 35 nM. Essential for controlling the spatiotemporal formation of the midzone and successful cytokinesis. Required for KIF14 localization to the central spindle and midbody. Required to recruit PLK1 to the spindle. Stimulates PLK1 phosphorylation of RACGAP1 to allow recruitment of ECT2 to the central spindle. Acts as an oncogene for promoting bladder cancer cells proliferation, apoptosis inhibition and carcinogenic progression. In Mus musculus (Mouse), this protein is Protein regulator of cytokinesis 1.